We begin with the raw amino-acid sequence, 420 residues long: Serine hydroxymethyltransferase (420 aa).

Residues L121 and 125–127 (GHL) contribute to the (6S)-5,6,7,8-tetrahydrofolate site. The residue at position 229 (K229) is an N6-(pyridoxal phosphate)lysine. 355–357 (SPF) is a binding site for (6S)-5,6,7,8-tetrahydrofolate.

Belongs to the SHMT family. As to quaternary structure, homodimer. The cofactor is pyridoxal 5'-phosphate.

It localises to the cytoplasm. The enzyme catalyses (6R)-5,10-methylene-5,6,7,8-tetrahydrofolate + glycine + H2O = (6S)-5,6,7,8-tetrahydrofolate + L-serine. The protein operates within one-carbon metabolism; tetrahydrofolate interconversion. It functions in the pathway amino-acid biosynthesis; glycine biosynthesis; glycine from L-serine: step 1/1. Catalyzes the reversible interconversion of serine and glycine with tetrahydrofolate (THF) serving as the one-carbon carrier. This reaction serves as the major source of one-carbon groups required for the biosynthesis of purines, thymidylate, methionine, and other important biomolecules. Also exhibits THF-independent aldolase activity toward beta-hydroxyamino acids, producing glycine and aldehydes, via a retro-aldol mechanism. This Chromohalobacter salexigens (strain ATCC BAA-138 / DSM 3043 / CIP 106854 / NCIMB 13768 / 1H11) protein is Serine hydroxymethyltransferase.